The chain runs to 156 residues: Small ribosomal subunit protein uS17A (156 aa).

An N-acetylserine modification is found at S2. Glycyl lysine isopeptide (Lys-Gly) (interchain with G-Cter in ubiquitin) cross-links involve residues K15, K46, K56, K57, K79, K96, K105, K133, K141, and K148.

It belongs to the universal ribosomal protein uS17 family. As to quaternary structure, component of the small ribosomal subunit (SSU). Mature yeast ribosomes consist of a small (40S) and a large (60S) subunit. The 40S small subunit contains 1 molecule of ribosomal RNA (18S rRNA) and 33 different proteins (encoded by 57 genes). The large 60S subunit contains 3 rRNA molecules (25S, 5.8S and 5S rRNA) and 46 different proteins (encoded by 81 genes). Post-translationally, N-terminally acetylated by acetyltransferase NatA.

It is found in the cytoplasm. Its function is as follows. Component of the ribosome, a large ribonucleoprotein complex responsible for the synthesis of proteins in the cell. The small ribosomal subunit (SSU) binds messenger RNAs (mRNAs) and translates the encoded message by selecting cognate aminoacyl-transfer RNA (tRNA) molecules. The large subunit (LSU) contains the ribosomal catalytic site termed the peptidyl transferase center (PTC), which catalyzes the formation of peptide bonds, thereby polymerizing the amino acids delivered by tRNAs into a polypeptide chain. The nascent polypeptides leave the ribosome through a tunnel in the LSU and interact with protein factors that function in enzymatic processing, targeting, and the membrane insertion of nascent chains at the exit of the ribosomal tunnel. This is Small ribosomal subunit protein uS17A from Saccharomyces cerevisiae (strain ATCC 204508 / S288c) (Baker's yeast).